We begin with the raw amino-acid sequence, 253 residues long: H repeat-associated putative transposase YbfD (253 aa).

The protein belongs to the transposase 11 family.

The polypeptide is H repeat-associated putative transposase YbfD (ybfD) (Escherichia coli (strain K12)).